The following is a 658-amino-acid chain: Threonine--tRNA ligase (658 aa).

Residues 1-64 form the TGS domain; the sequence is MSCSVSLSFP…GQSGQIEIIT (64 aa). The catalytic stretch occupies residues 246 to 549; sequence DHRRLGREMD…LIENFAGHMP (304 aa). Zn(2+)-binding residues include Cys343, His394, and His526.

It belongs to the class-II aminoacyl-tRNA synthetase family. Homodimer. The cofactor is Zn(2+).

It is found in the cytoplasm. The catalysed reaction is tRNA(Thr) + L-threonine + ATP = L-threonyl-tRNA(Thr) + AMP + diphosphate + H(+). Catalyzes the attachment of threonine to tRNA(Thr) in a two-step reaction: L-threonine is first activated by ATP to form Thr-AMP and then transferred to the acceptor end of tRNA(Thr). Also edits incorrectly charged L-seryl-tRNA(Thr). This is Threonine--tRNA ligase from Bartonella quintana (strain Toulouse) (Rochalimaea quintana).